The sequence spans 443 residues: C4-dicarboxylate transport protein (443 aa).

A run of 9 helical transmembrane segments spans residues 17–37 (PFYSHLYVQVLAAIAAGILLG), 57–77 (LVKMIIAPVIFLTVATGIAGM), 92–112 (LYFLTFSTLALVIGMVVANVV), 139–159 (EQSIVGFLTNIIPTTIVGAFA), 161–181 (GDILQVLFFSVLFGIALAMVG), 201–221 (LVAILMKAAPIGAFGAMAFTI), 234–254 (MLIGTFYLTSLLFVLVVLGAV), 320–340 (IYMTLAALFIAQATGINLSWG), and 368–388 (AATLSVVPSVPVAGMALILGI).

Belongs to the dicarboxylate/amino acid:cation symporter (DAACS) (TC 2.A.23) family.

It localises to the cell inner membrane. In terms of biological role, responsible for the transport of dicarboxylates such as succinate, fumarate, and malate from the periplasm across the membrane. The chain is C4-dicarboxylate transport protein from Rhizobium leguminosarum bv. trifolii (strain WSM2304).